The following is a 340-amino-acid chain: Phosphate acyltransferase (340 aa).

It belongs to the PlsX family. Homodimer. Probably interacts with PlsY.

It localises to the cytoplasm. It carries out the reaction a fatty acyl-[ACP] + phosphate = an acyl phosphate + holo-[ACP]. The protein operates within lipid metabolism; phospholipid metabolism. Catalyzes the reversible formation of acyl-phosphate (acyl-PO(4)) from acyl-[acyl-carrier-protein] (acyl-ACP). This enzyme utilizes acyl-ACP as fatty acyl donor, but not acyl-CoA. The chain is Phosphate acyltransferase from Pseudomonas savastanoi pv. phaseolicola (strain 1448A / Race 6) (Pseudomonas syringae pv. phaseolicola (strain 1448A / Race 6)).